Here is a 445-residue protein sequence, read N- to C-terminus: Phosphoglucosamine mutase (445 aa).

Serine 102 (phosphoserine intermediate) is an active-site residue. Residues serine 102, aspartate 241, aspartate 243, and aspartate 245 each contribute to the Mg(2+) site. Serine 102 carries the phosphoserine modification.

Belongs to the phosphohexose mutase family. The cofactor is Mg(2+). Activated by phosphorylation.

The catalysed reaction is alpha-D-glucosamine 1-phosphate = D-glucosamine 6-phosphate. In terms of biological role, catalyzes the conversion of glucosamine-6-phosphate to glucosamine-1-phosphate. The chain is Phosphoglucosamine mutase from Salmonella dublin (strain CT_02021853).